A 192-amino-acid polypeptide reads, in one-letter code: Peptidyl-tRNA hydrolase (192 aa).

Tyr-16 serves as a coordination point for tRNA. The active-site Proton acceptor is the His-21. TRNA is bound by residues Tyr-66 and Asn-68.

The protein belongs to the PTH family. In terms of assembly, monomer.

It localises to the cytoplasm. The enzyme catalyses an N-acyl-L-alpha-aminoacyl-tRNA + H2O = an N-acyl-L-amino acid + a tRNA + H(+). In terms of biological role, hydrolyzes ribosome-free peptidyl-tRNAs (with 1 or more amino acids incorporated), which drop off the ribosome during protein synthesis, or as a result of ribosome stalling. Its function is as follows. Catalyzes the release of premature peptidyl moieties from peptidyl-tRNA molecules trapped in stalled 50S ribosomal subunits, and thus maintains levels of free tRNAs and 50S ribosomes. In Aquifex aeolicus (strain VF5), this protein is Peptidyl-tRNA hydrolase.